Reading from the N-terminus, the 223-residue chain is Deoxyribose-phosphate aldolase (223 aa).

The active-site Proton donor/acceptor is the Asp-92. Lys-153 serves as the catalytic Schiff-base intermediate with acetaldehyde. Residue Lys-182 is the Proton donor/acceptor of the active site.

This sequence belongs to the DeoC/FbaB aldolase family. DeoC type 1 subfamily.

It is found in the cytoplasm. The catalysed reaction is 2-deoxy-D-ribose 5-phosphate = D-glyceraldehyde 3-phosphate + acetaldehyde. It functions in the pathway carbohydrate degradation; 2-deoxy-D-ribose 1-phosphate degradation; D-glyceraldehyde 3-phosphate and acetaldehyde from 2-deoxy-alpha-D-ribose 1-phosphate: step 2/2. Catalyzes a reversible aldol reaction between acetaldehyde and D-glyceraldehyde 3-phosphate to generate 2-deoxy-D-ribose 5-phosphate. The chain is Deoxyribose-phosphate aldolase from Mycoplasmoides gallisepticum (strain R(low / passage 15 / clone 2)) (Mycoplasma gallisepticum).